The chain runs to 334 residues: MSIRIGYKASAEQFGPRDLVEYAVRAEELGLDSVTVSDHFLPWRHEGGHAPFALAWMAAVGERTNRVLIGTSVLTPTFRYNPAVIAQAFATMGLLYPGRIMLGVGTGEALNEIAVSGREWPEFKERFARLREAVDLIRDLWTKEGVSSDGPFYPTVDASIYDRPETPVKVYVAAGGPLVAKYAGRAGDGFIATSGKGMELYTEKLLPAVKEGAEKAGKTFEDVDRMLEVKVSYDRDPEAALENTRFWAPLSLTPEQKHSVDSATEMERLADELPIEQVAKRWIVASDPEQAVKQFRPYLEAGFNHFVVHGPGHDQERFLTQFTEDVVPLLRKLG.

Aspartate 38 lines the coenzyme F420-(gamma-Glu)n pocket. Residue histidine 39 is the Proton donor of the active site. Coenzyme F420-(gamma-Glu)n is bound by residues threonine 75 and 106-107; that span reads TG. The active-site Proton acceptor is glutamate 108. Coenzyme F420-(gamma-Glu)n is bound by residues asparagine 111, 175-176, and 178-179; these read GG and LV. The substrate site is built by threonine 193, lysine 196, lysine 257, and arginine 281.

It belongs to the F420-dependent glucose-6-phosphate dehydrogenase family. Homodimer.

It catalyses the reaction oxidized coenzyme F420-(gamma-L-Glu)(n) + D-glucose 6-phosphate + H(+) = 6-phospho-D-glucono-1,5-lactone + reduced coenzyme F420-(gamma-L-Glu)(n). In terms of biological role, catalyzes the coenzyme F420-dependent oxidation of glucose 6-phosphate (G6P) to 6-phosphogluconolactone. This Kribbella flavida (strain DSM 17836 / JCM 10339 / NBRC 14399) protein is F420-dependent glucose-6-phosphate dehydrogenase.